A 469-amino-acid chain; its full sequence is Argininosuccinate lyase (469 aa).

It belongs to the lyase 1 family. Argininosuccinate lyase subfamily.

Its subcellular location is the cytoplasm. It carries out the reaction 2-(N(omega)-L-arginino)succinate = fumarate + L-arginine. The protein operates within amino-acid biosynthesis; L-arginine biosynthesis; L-arginine from L-ornithine and carbamoyl phosphate: step 3/3. The chain is Argininosuccinate lyase from Polaromonas naphthalenivorans (strain CJ2).